Consider the following 286-residue polypeptide: MSLQDKLRAYARLMRIDRPIGTLLLLWPCLMALVLAAQGLPDIKVLLIFIVGVVIMRANGCIINDFADRKLDAHVERTSMRPLVSGEVSVKEALTLFTLLGLAAFCLVLWLNPLVVQLSVVGIILTVMYPFMKRVTNMPQMFLGIVWSWSIPMAYAAQLGEVPVEAWWLFMANWCWTVAYDTMYAIVDRDDDLKVGIKSTAILFGRFDRQIIGVFQLAALGCFVMAGLVADRGVIYGLGIISFIGFAVYQQRLIFGRERAPCFKAFLNNNWAGMVLFIALALDYMI.

A run of 8 helical transmembrane segments spans residues 20–40 (IGTL…AQGL), 43–63 (IKVL…GCII), 96–116 (LFTL…PLVV), 142–162 (FLGI…LGEV), 167–187 (WWLF…YAIV), 210–230 (QIIG…GLVA), 235–255 (IYGL…RLIF), and 266–286 (FLNN…DYMI).

Belongs to the UbiA prenyltransferase family. Mg(2+) serves as cofactor.

It is found in the cell inner membrane. The catalysed reaction is all-trans-octaprenyl diphosphate + 4-hydroxybenzoate = 4-hydroxy-3-(all-trans-octaprenyl)benzoate + diphosphate. The protein operates within cofactor biosynthesis; ubiquinone biosynthesis. In terms of biological role, catalyzes the prenylation of para-hydroxybenzoate (PHB) with an all-trans polyprenyl group. Mediates the second step in the final reaction sequence of ubiquinone-8 (UQ-8) biosynthesis, which is the condensation of the polyisoprenoid side chain with PHB, generating the first membrane-bound Q intermediate 3-octaprenyl-4-hydroxybenzoate. The polypeptide is 4-hydroxybenzoate octaprenyltransferase (Shewanella frigidimarina (strain NCIMB 400)).